A 362-amino-acid polypeptide reads, in one-letter code: Adenosine deaminase (362 aa).

Positions 19 and 21 each coordinate Zn(2+). Residues His-21, Asp-23, and Gly-181 each coordinate substrate. His-208 serves as a coordination point for Zn(2+). The active-site Proton donor is Glu-211. Residue Asp-300 participates in Zn(2+) binding.

Belongs to the metallo-dependent hydrolases superfamily. Adenosine and AMP deaminases family. Adenosine deaminase subfamily. The cofactor is Zn(2+).

It carries out the reaction adenosine + H2O + H(+) = inosine + NH4(+). It catalyses the reaction 2'-deoxyadenosine + H2O + H(+) = 2'-deoxyinosine + NH4(+). In terms of biological role, catalyzes the hydrolytic deamination of adenosine and 2-deoxyadenosine. The chain is Adenosine deaminase from Mycolicibacterium vanbaalenii (strain DSM 7251 / JCM 13017 / BCRC 16820 / KCTC 9966 / NRRL B-24157 / PYR-1) (Mycobacterium vanbaalenii).